A 217-amino-acid chain; its full sequence is Ribonuclease HII (217 aa).

In terms of domain architecture, RNase H type-2 spans 27–216; the sequence is SQVAGVDEAG…VKESIQEGVC (190 aa). 3 residues coordinate a divalent metal cation: Asp33, Glu34, and Asp126.

It belongs to the RNase HII family. Mn(2+) serves as cofactor. Mg(2+) is required as a cofactor.

The protein resides in the cytoplasm. The catalysed reaction is Endonucleolytic cleavage to 5'-phosphomonoester.. In terms of biological role, endonuclease that specifically degrades the RNA of RNA-DNA hybrids. In Chlamydia trachomatis serovar L2 (strain ATCC VR-902B / DSM 19102 / 434/Bu), this protein is Ribonuclease HII.